Consider the following 545-residue polypeptide: CTP synthase (545 aa).

Positions 1-266 (MTTRYIFVTG…DDLVVKRFGL (266 aa)) are amidoligase domain. Position 14 (Ser14) interacts with CTP. Ser14 lines the UTP pocket. Residues 15–20 (SLGKGI) and Asp72 each bind ATP. 2 residues coordinate Mg(2+): Asp72 and Glu140. CTP is bound by residues 147–149 (DIE), 187–192 (KTKPTQ), and Lys223. UTP-binding positions include 187–192 (KTKPTQ) and Lys223. 239-241 (KDV) is an ATP binding site. Positions 291–542 (VIGMVGKYIE…IAAASAHQKR (252 aa)) constitute a Glutamine amidotransferase type-1 domain. L-glutamine is bound at residue Gly352. Cys379 functions as the Nucleophile; for glutamine hydrolysis in the catalytic mechanism. Residues 380-383 (LGMQ), Glu403, and Arg470 contribute to the L-glutamine site. Catalysis depends on residues His515 and Glu517.

It belongs to the CTP synthase family. As to quaternary structure, homotetramer.

The catalysed reaction is UTP + L-glutamine + ATP + H2O = CTP + L-glutamate + ADP + phosphate + 2 H(+). It carries out the reaction L-glutamine + H2O = L-glutamate + NH4(+). The enzyme catalyses UTP + NH4(+) + ATP = CTP + ADP + phosphate + 2 H(+). It functions in the pathway pyrimidine metabolism; CTP biosynthesis via de novo pathway; CTP from UDP: step 2/2. Allosterically activated by GTP, when glutamine is the substrate; GTP has no effect on the reaction when ammonia is the substrate. The allosteric effector GTP functions by stabilizing the protein conformation that binds the tetrahedral intermediate(s) formed during glutamine hydrolysis. Inhibited by the product CTP, via allosteric rather than competitive inhibition. Catalyzes the ATP-dependent amination of UTP to CTP with either L-glutamine or ammonia as the source of nitrogen. Regulates intracellular CTP levels through interactions with the four ribonucleotide triphosphates. The chain is CTP synthase from Shewanella baltica (strain OS223).